The chain runs to 1909 residues: Plexin-B3 (1909 aa).

Positions 1 to 44 are cleaved as a signal peptide; that stretch reads MCHAAQETPLLHHFMAPVMARWPPFGLCLLLLLLSPPPLPLTGA. Positions 45 to 471 constitute a Sema domain; the sequence is HRFSAPNTTL…TAHQVDRIPV (427 aa). Residues 45–1255 lie on the Extracellular side of the membrane; that stretch reads HRFSAPNTTL…PLSAFPVEAQ (1211 aa). N-linked (GlcNAc...) asparagine glycosylation occurs at Asn-51. Cystine bridges form between Cys-98-Cys-107 and Cys-132-Cys-140. N-linked (GlcNAc...) asparagine glycosylation is present at Asn-231. 8 disulfides stabilise this stretch: Cys-267-Cys-370, Cys-283-Cys-315, Cys-333-Cys-357, Cys-474-Cys-491, Cys-480-Cys-525, Cys-483-Cys-500, Cys-494-Cys-506, and Cys-562-Cys-580. The PSI 1 domain occupies 473-526; that stretch reads ACPQFPDCASCLQAQDPLCGWCVLQGRCTRKGQCGRAGQLNQWLWSYEEDSHCL. Asn-615 is a glycosylation site (N-linked (GlcNAc...) asparagine). PSI domains are found at residues 620 to 682 and 787 to 833; these read DCSA…GACP and DCAM…LLCP. Residues Asn-802, Asn-900, Asn-957, Asn-1101, and Asn-1218 are each glycosylated (N-linked (GlcNAc...) asparagine). 4 consecutive IPT/TIG domains span residues 835 to 925, 927 to 1012, 1015 to 1145, and 1159 to 1244; these read PSID…FTYQ, PVLL…FRYT, PQLV…FLYQ, and ARPY…YEAE. A helical transmembrane segment spans residues 1256 to 1276; that stretch reads AGVGMGAAVLIAAVLLLTLMY. The Cytoplasmic portion of the chain corresponds to 1277 to 1909; the sequence is RHKSKQALRD…ALVENKVTDL (633 aa).

This sequence belongs to the plexin family. As to quaternary structure, interacts (via cytoplasmic domain) with RAC1 and ARHGDIA. Binds MET and MST1R. Interacts (via cytoplasmic domain) with FSCN1. Interacts with RIT2/RIN. May form homodimers (via Sema domain). Expression detected in Purkinje and granular cells in cerebellum, and in brain neocortex but not in corpus callosum. Expressed in glioma cells and embryonic kidney cells (at protein level). Expressed in brain, liver, pancreas and placenta, with weak expression detected also in lung and kidney. Expressed in several glioma cell lines.

It is found in the cell membrane. Its function is as follows. Receptor for SEMA5A that plays a role in axon guidance, invasive growth and cell migration. Stimulates neurite outgrowth and mediates Ca(2+)/Mg(2+)-dependent cell aggregation. In glioma cells, SEMA5A stimulation of PLXNB3 results in the disassembly of F-actin stress fibers, disruption of focal adhesions and cellular collapse as well as inhibition of cell migration and invasion through ARHGDIA-mediated inactivation of RAC1. This Homo sapiens (Human) protein is Plexin-B3 (PLXNB3).